Consider the following 270-residue polypeptide: uncharacterized protein (270 aa).

The N-terminal stretch at 1 to 23 (MFNFITFILFAVVCISYCHKSRG) is a signal peptide. Residues N246 and N252 are each glycosylated (N-linked (GlcNAc...) asparagine).

Its subcellular location is the secreted. This is an uncharacterized protein from Caenorhabditis elegans.